The sequence spans 301 residues: Protein p34 (301 aa).

5 consecutive transmembrane segments (helical) span residues 15-35 (YLSV…WVVT), 40-60 (ILAA…NLIA), 83-103 (TIFS…FSSV), 120-140 (TVMY…TYVI), and 171-191 (LSDY…LYIF).

It belongs to the cation diffusion facilitator (CDF) transporter (TC 2.A.4) family.

It localises to the cell membrane. In Rickettsia rickettsii (strain Sheila Smith), this protein is Protein p34 (p34).